A 717-amino-acid chain; its full sequence is Cell division cycle protein 27 homolog A (717 aa).

Over residues 198 to 208 the composition is skewed to polar residues; sequence TEHIPGENQQD. Disordered stretches follow at residues 198–217, 282–315, and 342–374; these read TEHI…QPGD, LSAE…KDSH, and SKEA…SPDR. Residues 293–304 are compositionally biased toward basic residues; sequence RRSARIAARKKN. Over residues 342 to 356 the composition is skewed to polar residues; that stretch reads SKEATTSGQSVSDIG. 7 TPR repeats span residues 421 to 454, 489 to 522, 524 to 556, 557 to 590, 592 to 624, 625 to 658, and 659 to 692; these read HWVL…YPYA, PESW…NERF, YAHT…DTRH, YNAW…NPRS, VIMC…DAKN, PLPK…APQE, and SSVH…SPSP.

The protein belongs to the APC3/CDC27 family. In terms of assembly, the APC/C is composed of at least 10 subunits. Interacts with APC2 and APC10.

It localises to the nucleus. The protein operates within protein modification; protein ubiquitination. Its function is as follows. Component of the anaphase promoting complex/cyclosome (APC/C), a cell cycle-regulated E3 ubiquitin-protein ligase complex that controls progression through mitosis and the G1 phase of the cell cycle. The APC/C complex controls several key steps in the cell cycle by mediating ubiquitination and subsequent degradation of target proteins such as cyclins. The APC/C complex is required for the female gametophyte development and is involved in several aspect of development by controlling cell division and cell elongation. Involved in the control of endoreduplication. Functionally redundant with CDC27B in the control of gametophyte development. In Arabidopsis thaliana (Mouse-ear cress), this protein is Cell division cycle protein 27 homolog A (CDC27A).